Consider the following 668-residue polypeptide: Metal reductase (668 aa).

Residues 23-25 (PMH), Gly-57, Gln-98, Arg-216, Arg-290, and 312-313 (AR) each bind FMN. The [4Fe-4S] cluster site is built by Cys-336 and Cys-339. Gln-341 provides a ligand contact to FAD. Residues Cys-343 and Cys-355 each coordinate [4Fe-4S] cluster. 5 residues coordinate FAD: Ala-386, Glu-405, Gln-413, Arg-423, and Ala-450.

This sequence in the N-terminal section; belongs to the NADH:flavin oxidoreductase/NADH oxidase family. Homotetramer. Requires FMN as cofactor. FAD serves as cofactor. It depends on [4Fe-4S] cluster as a cofactor.

The protein localises to the cytoplasm. Functionally, metal reductase able to reduce Fe(III)-chelates to Fe(II)-chelates, as well as soluble Cr(VI) and U(VI), using NADH as electron donor. Cannot use NADPH as an electron donor. Is unable to reduce riboflavin and FMN with NADH as electron donor. May have an in vivo role in metal reduction in D.reducens, which is an organism capable of reducing contaminant heavy metals and radionuclides. This chain is Metal reductase, found in Desulforamulus reducens (strain ATCC BAA-1160 / DSM 100696 / MI-1) (Desulfotomaculum reducens).